A 262-amino-acid polypeptide reads, in one-letter code: Cytochrome c oxidase subunit 3 (262 aa).

Helical transmembrane passes span 39–59, 83–103, 120–140, 163–183, 201–221, and 240–260; these read YTMT…YQWW, GMIL…WAFF, VGIA…ILLA, GLFF…YEYI, ATGF…ICFL, and AWYW…IYWW.

This sequence belongs to the cytochrome c oxidase subunit 3 family. Component of the cytochrome c oxidase (complex IV, CIV), a multisubunit enzyme composed of a catalytic core of 3 subunits and several supernumerary subunits. The complex exists as a monomer or a dimer and forms supercomplexes (SCs) in the inner mitochondrial membrane with ubiquinol-cytochrome c oxidoreductase (cytochrome b-c1 complex, complex III, CIII).

The protein resides in the mitochondrion inner membrane. It carries out the reaction 4 Fe(II)-[cytochrome c] + O2 + 8 H(+)(in) = 4 Fe(III)-[cytochrome c] + 2 H2O + 4 H(+)(out). Component of the cytochrome c oxidase, the last enzyme in the mitochondrial electron transport chain which drives oxidative phosphorylation. The respiratory chain contains 3 multisubunit complexes succinate dehydrogenase (complex II, CII), ubiquinol-cytochrome c oxidoreductase (cytochrome b-c1 complex, complex III, CIII) and cytochrome c oxidase (complex IV, CIV), that cooperate to transfer electrons derived from NADH and succinate to molecular oxygen, creating an electrochemical gradient over the inner membrane that drives transmembrane transport and the ATP synthase. Cytochrome c oxidase is the component of the respiratory chain that catalyzes the reduction of oxygen to water. Electrons originating from reduced cytochrome c in the intermembrane space (IMS) are transferred via the dinuclear copper A center (CU(A)) of subunit 2 and heme A of subunit 1 to the active site in subunit 1, a binuclear center (BNC) formed by heme A3 and copper B (CU(B)). The BNC reduces molecular oxygen to 2 water molecules using 4 electrons from cytochrome c in the IMS and 4 protons from the mitochondrial matrix. The chain is Cytochrome c oxidase subunit 3 (COIII) from Anopheles gambiae (African malaria mosquito).